Consider the following 497-residue polypeptide: Cytochrome P450 monooxygenase opdB (497 aa).

Residues 26–46 (YLGAMAGSVILLISAFTLSLG) form a helical membrane-spanning segment. Positions 69–90 (MSKFTRSRELSQQGEDAAGTEP) are disordered. C454 lines the heme pocket.

The cofactor is heme.

It is found in the membrane. It functions in the pathway secondary metabolite biosynthesis. Cytochrome P450 monooxygenase; part of the gene cluster that mediates the biosynthesis of oxopyrrolidines, polyketide-amino acid hybrid compounds with feature structures of tetramic acid. Does not seem to play a role in oxopyrrolidines A and B biosynthesis. May be involved in further modifications of these oxopyrrolidines. This Penicillium oxalicum (strain 114-2 / CGMCC 5302) (Penicillium decumbens) protein is Cytochrome P450 monooxygenase opdB.